The chain runs to 266 residues: Glutamate racemase (266 aa).

Substrate contacts are provided by residues 9-10 and 41-42; these read DS and YG. Cys-72 functions as the Proton donor/acceptor in the catalytic mechanism. 73–74 lines the substrate pocket; that stretch reads NT. Cys-184 (proton donor/acceptor) is an active-site residue. 185 to 186 contacts substrate; the sequence is TH.

Belongs to the aspartate/glutamate racemases family. As to quaternary structure, homodimer.

It carries out the reaction L-glutamate = D-glutamate. Its pathway is cell wall biogenesis; peptidoglycan biosynthesis. In terms of biological role, provides the (R)-glutamate required for cell wall biosynthesis. This is Glutamate racemase from Staphylococcus aureus (strain MRSA252).